The primary structure comprises 442 residues: Chromosomal replication initiator protein DnaA (442 aa).

Positions 1–68 (MDAWPRCLER…ELLAYFVGNG (68 aa)) are domain I, interacts with DnaA modulators. Residues 68 to 104 (GDVALAVGSRPRAPEPAPAPVAVPSAPQAAPIVPFAG) are domain II. The tract at residues 105-322 (NLDSHYTFAN…GALNTLVARA (218 aa)) is domain III, AAA+ region. ATP-binding residues include Gly-150, Gly-152, Lys-153, and Thr-154. Residues 323–442 (NFTGRSITVE…WEKLIRKLSE (120 aa)) are domain IV, binds dsDNA.

The protein belongs to the DnaA family. As to quaternary structure, oligomerizes as a right-handed, spiral filament on DNA at oriC.

The protein resides in the cytoplasm. In terms of biological role, plays an essential role in the initiation and regulation of chromosomal replication. ATP-DnaA binds to the origin of replication (oriC) to initiate formation of the DNA replication initiation complex once per cell cycle. Binds the DnaA box (a 9 base pair repeat at the origin) and separates the double-stranded (ds)DNA. Forms a right-handed helical filament on oriC DNA; dsDNA binds to the exterior of the filament while single-stranded (ss)DNA is stabiized in the filament's interior. The ATP-DnaA-oriC complex binds and stabilizes one strand of the AT-rich DNA unwinding element (DUE), permitting loading of DNA polymerase. After initiation quickly degrades to an ADP-DnaA complex that is not apt for DNA replication. Binds acidic phospholipids. In Xanthomonas axonopodis pv. citri (strain 306), this protein is Chromosomal replication initiator protein DnaA.